The chain runs to 309 residues: MKPVIVVHGGAGKIVEELDATYRAGVKRAVLKGYDVLSQGGSALTAVEEAVIVLEDEQIFNAGHGSVLNEKGDIEMDAIIMDGKNLDSGAVSAIRNIANPIKLARLVMEKTDHMLLTCEGATLFAKAQGIPEVPNESLVTERSRKRWMKNLKENSNPVADQIGLGTVGAVAIDCEGNVACATSTGGLTNKMVGRVGDTACIGSGGYADNNVGAVSTTGHGESIMKVILARLILHHMEQGKSPEEAADAGLNYMKSRVGGIGGVIIVNSSGDWTAKFSTNQMSWAAVKDDQLHIGIYHGENNVTPLEKAL.

Thr166 acts as the Nucleophile in catalysis. Substrate contacts are provided by residues 194-197 and 217-220; these read RVGD and TGHG.

This sequence belongs to the Ntn-hydrolase family. In terms of assembly, heterodimer of an alpha and beta chain produced by autocleavage. Post-translationally, cleaved into an alpha and beta chain by autocatalysis; this activates the enzyme. The N-terminal residue of the beta subunit is responsible for the nucleophile hydrolase activity.

It localises to the cytoplasm. The enzyme catalyses L-asparagine + H2O = L-aspartate + NH4(+). It catalyses the reaction Cleavage of a beta-linked Asp residue from the N-terminus of a polypeptide.. Its function is as follows. Has both L-asparaginase and beta-aspartyl peptidase activity. Does not have aspartylglucosaminidase activity and is inactive toward GlcNAc-L-Asn. Likewise, has no activity toward glutamine. This Xenopus laevis (African clawed frog) protein is Isoaspartyl peptidase/L-asparaginase (asrgl1).